The sequence spans 86 residues: Protein Tat (86 aa).

Residues 1-24 (MEPVDPRLEPWKHPGSQPKTACTN) form an interaction with human CREBBP region. The interval 1-48 (MEPVDPRLEPWKHPGSQPKTACTNCYCKKCCFHCQVCFITKALGISYG) is transactivation. 3 residues coordinate Zn(2+): Cys22, Cys25, and Cys27. Residues 22–37 (CTNCYCKKCCFHCQVC) form a cysteine-rich region. N6-acetyllysine; by host PCAF is present on Lys28. Zn(2+) is bound by residues Cys30, His33, Cys34, and Cys37. Positions 38–48 (FITKALGISYG) are core. The span at 48 to 59 (GRKKRRQRRRAH) shows a compositional bias: basic residues. A disordered region spans residues 48–86 (GRKKRRQRRRAHQNSQTHQASLSKQPTSQPRGDPTGPKE). The short motif at 49 to 57 (RKKRRQRRR) is the Nuclear localization signal, RNA-binding (TAR), and protein transduction element. Residues 49–86 (RKKRRQRRRAHQNSQTHQASLSKQPTSQPRGDPTGPKE) are interaction with the host capping enzyme RNGTT. Residues Lys50 and Lys51 each carry the N6-acetyllysine; by host EP300 and GCN5L2 modification. 2 positions are modified to asymmetric dimethylarginine; by host PRMT6: Arg52 and Arg53. The segment covering 60-77 (QNSQTHQASLSKQPTSQP) has biased composition (polar residues). Residue Lys71 forms a Glycyl lysine isopeptide (Lys-Gly) (interchain with G-Cter in ubiquitin) linkage. The short motif at 78–80 (RGD) is the Cell attachment site element.

The protein belongs to the lentiviruses Tat family. In terms of assembly, interacts with host CCNT1. Associates with the P-TEFb complex composed at least of Tat, P-TEFb (CDK9 and CCNT1), TAR RNA, RNA Pol II. Recruits the HATs CREBBP, TAF1/TFIID, EP300, PCAF and GCN5L2. Interacts with host KAT5/Tip60; this interaction targets the latter to degradation. Interacts with the host deacetylase SIRT1. Interacts with host capping enzyme RNGTT; this interaction stimulates RNGTT. Binds to host KDR, and to the host integrins ITGAV/ITGB3 and ITGA5/ITGB1. Interacts with host KPNB1/importin beta-1 without previous binding to KPNA1/importin alpha-1. Interacts with EIF2AK2. Interacts with host nucleosome assembly protein NAP1L1; this interaction may be required for the transport of Tat within the nucleus, since the two proteins interact at the nuclear rim. Interacts with host C1QBP/SF2P32; this interaction involves lysine-acetylated Tat. Interacts with the host chemokine receptors CCR2, CCR3 and CXCR4. Interacts with host DPP4/CD26; this interaction may trigger an anti-proliferative effect. Interacts with host LDLR. Interacts with the host extracellular matrix metalloproteinase MMP1. Interacts with host PRMT6; this interaction mediates Tat's methylation. Interacts with, and is ubiquitinated by MDM2/Hdm2. Interacts with host PSMC3 and HTATIP2. Interacts with STAB1; this interaction may overcome SATB1-mediated repression of IL2 and IL2RA (interleukin) in T cells by binding to the same domain than HDAC1. Interacts (when acetylated) with human CDK13, thereby increasing HIV-1 mRNA splicing and promoting the production of the doubly spliced HIV-1 protein Nef. Interacts with host TBP; this interaction modulates the activity of transcriptional pre-initiation complex. Interacts with host RELA. Interacts with host PLSCR1; this interaction negatively regulates Tat transactivation activity by altering its subcellular distribution. In terms of processing, asymmetrical arginine methylation by host PRMT6 seems to diminish the transactivation capacity of Tat and affects the interaction with host CCNT1. Acetylation by EP300, CREBBP, GCN5L2/GCN5 and PCAF regulates the transactivation activity of Tat. EP300-mediated acetylation of Lys-50 promotes dissociation of Tat from the TAR RNA through the competitive binding to PCAF's bromodomain. In addition, the non-acetylated Tat's N-terminus can also interact with PCAF. PCAF-mediated acetylation of Lys-28 enhances Tat's binding to CCNT1. Lys-50 is deacetylated by SIRT1. Post-translationally, polyubiquitination by host MDM2 does not target Tat to degradation, but activates its transactivation function and fosters interaction with CCNT1 and TAR RNA. In terms of processing, phosphorylated by EIF2AK2 on serine and threonine residues adjacent to the basic region important for TAR RNA binding and function. Phosphorylation of Tat by EIF2AK2 is dependent on the prior activation of EIF2AK2 by dsRNA.

The protein resides in the host nucleus. It is found in the host nucleolus. The protein localises to the host cytoplasm. Its subcellular location is the secreted. In terms of biological role, transcriptional activator that increases RNA Pol II processivity, thereby increasing the level of full-length viral transcripts. Recognizes a hairpin structure at the 5'-LTR of the nascent viral mRNAs referred to as the transactivation responsive RNA element (TAR) and recruits the cyclin T1-CDK9 complex (P-TEFb complex) that will in turn hyperphosphorylate the RNA polymerase II to allow efficient elongation. The CDK9 component of P-TEFb and other Tat-activated kinases hyperphosphorylate the C-terminus of RNA Pol II that becomes stabilized and much more processive. Other factors such as HTATSF1/Tat-SF1, SUPT5H/SPT5, and HTATIP2 are also important for Tat's function. Besides its effect on RNA Pol II processivity, Tat induces chromatin remodeling of proviral genes by recruiting the histone acetyltransferases (HATs) CREBBP, EP300 and PCAF to the chromatin. This also contributes to the increase in proviral transcription rate, especially when the provirus integrates in transcriptionally silent region of the host genome. To ensure maximal activation of the LTR, Tat mediates nuclear translocation of NF-kappa-B by interacting with host RELA. Through its interaction with host TBP, Tat may also modulate transcription initiation. Tat can reactivate a latently infected cell by penetrating in it and transactivating its LTR promoter. In the cytoplasm, Tat is thought to act as a translational activator of HIV-1 mRNAs. Functionally, extracellular circulating Tat can be endocytosed by surrounding uninfected cells via the binding to several surface receptors such as CD26, CXCR4, heparan sulfate proteoglycans (HSPG) or LDLR. Neurons are rarely infected, but they internalize Tat via their LDLR. Through its interaction with nuclear HATs, Tat is potentially able to control the acetylation-dependent cellular gene expression. Modulates the expression of many cellular genes involved in cell survival, proliferation or in coding for cytokines or cytokine receptors. Tat plays a role in T-cell and neurons apoptosis. Tat induced neurotoxicity and apoptosis probably contribute to neuroAIDS. Circulating Tat also acts as a chemokine-like and/or growth factor-like molecule that binds to specific receptors on the surface of the cells, affecting many cellular pathways. In the vascular system, Tat binds to ITGAV/ITGB3 and ITGA5/ITGB1 integrins dimers at the surface of endothelial cells and competes with bFGF for heparin-binding sites, leading to an excess of soluble bFGF. The chain is Protein Tat from Homo sapiens (Human).